A 273-amino-acid chain; its full sequence is Ribonuclease Z (273 aa).

5 residues coordinate Zn(2+): His61, His63, His146, Asp169, and His233.

The protein belongs to the RNase Z family. In terms of assembly, homodimer. Requires Zn(2+) as cofactor.

It catalyses the reaction Endonucleolytic cleavage of RNA, removing extra 3' nucleotides from tRNA precursor, generating 3' termini of tRNAs. A 3'-hydroxy group is left at the tRNA terminus and a 5'-phosphoryl group is left at the trailer molecule.. Functionally, zinc phosphodiesterase, which displays some tRNA 3'-processing endonuclease activity. Probably involved in tRNA maturation, by removing a 3'-trailer from precursor tRNA. In Mycobacterium tuberculosis (strain ATCC 25177 / H37Ra), this protein is Ribonuclease Z.